The chain runs to 94 residues: Large ribosomal subunit protein uL23cz (94 aa).

It belongs to the universal ribosomal protein uL23 family. In terms of assembly, part of the 50S ribosomal subunit.

Its subcellular location is the plastid. It localises to the chloroplast. Its function is as follows. Binds to 23S rRNA. This chain is Large ribosomal subunit protein uL23cz (rpl23-A), found in Agrostis stolonifera (Creeping bentgrass).